Here is a 617-residue protein sequence, read N- to C-terminus: UvrABC system protein C (617 aa).

In terms of domain architecture, GIY-YIG spans 12–91; it reads EKPGVYLMKD…IKKYKPKYNV (80 aa). The region spanning 203-238 is the UVR domain; that stretch reads EWLVEKLKEEMQKAADELRFEEAARLRDQIFAIEKI.

Belongs to the UvrC family. As to quaternary structure, interacts with UvrB in an incision complex.

The protein resides in the cytoplasm. Functionally, the UvrABC repair system catalyzes the recognition and processing of DNA lesions. UvrC both incises the 5' and 3' sides of the lesion. The N-terminal half is responsible for the 3' incision and the C-terminal half is responsible for the 5' incision. The chain is UvrABC system protein C from Caldanaerobacter subterraneus subsp. tengcongensis (strain DSM 15242 / JCM 11007 / NBRC 100824 / MB4) (Thermoanaerobacter tengcongensis).